The primary structure comprises 264 residues: Putative hydro-lyase Psyr_0498 (264 aa).

This sequence belongs to the D-glutamate cyclase family.

This is Putative hydro-lyase Psyr_0498 from Pseudomonas syringae pv. syringae (strain B728a).